The sequence spans 894 residues: Bifunctional enzyme RhaA/RhaB (894 aa).

Residues 1–465 form a rhamnulokinase region; sequence MGEYRLAVDI…TAFPVTYFLP (465 aa). The interval 466-894 is L-rhamnose isomerase; it reads QRSESHVSSR…KRESEKAKQR (429 aa). 3 residues coordinate Mn(2+): His-730, Asp-762, and Asp-764.

In the N-terminal section; belongs to the rhamnulokinase family. It in the C-terminal section; belongs to the rhamnose isomerase family. Requires Mn(2+) as cofactor.

It localises to the cytoplasm. It catalyses the reaction L-rhamnulose + ATP = L-rhamnulose 1-phosphate + ADP + H(+). The enzyme catalyses L-rhamnopyranose = L-rhamnulose. It participates in carbohydrate degradation; L-rhamnose degradation; glycerone phosphate from L-rhamnose: step 1/3. It functions in the pathway carbohydrate degradation; L-rhamnose degradation; glycerone phosphate from L-rhamnose: step 2/3. This Shouchella clausii (strain KSM-K16) (Alkalihalobacillus clausii) protein is Bifunctional enzyme RhaA/RhaB (rhaAB).